Reading from the N-terminus, the 494-residue chain is Arp2/3 complex-activating protein rickA (494 aa).

The disordered stretch occupies residues 312 to 494 (PLENNIPPPP…RNSQKPSFVR (183 aa)). The span at 317–357 (IPPPPPPPPPLPDNNIPPPPPPPPPLPDNNIPPPPPPPPMA) shows a compositional bias: pro residues. A WH2 domain is found at 383-400 (DTSDLMREIAGPKKLKKV). The central and acidic domains stretch occupies residues 421-454 (VNKPSGLESIFARRVAIEMSDSSSSESDSGNWSD). The span at 440-456 (SDSSSSESDSGNWSDVS) shows a compositional bias: low complexity. The segment covering 477-494 (THAQKINNRNSQKPSFVR) has biased composition (polar residues).

The protein localises to the cell surface. Functionally, recruits and activates the Arp2/3 complex, which in turn leads to actin polymerization, promoting Rickettsia motility during infection. In Rickettsia rickettsii, this protein is Arp2/3 complex-activating protein rickA (rickA).